Here is a 407-residue protein sequence, read N- to C-terminus: 1-deoxy-D-xylulose 5-phosphate reductoisomerase (407 aa).

Thr-27, Gly-28, Ser-29, Ile-30, Ala-53, Arg-54, Asn-55, and Asn-140 together coordinate NADPH. 1-deoxy-D-xylulose 5-phosphate is bound at residue Lys-141. Residue Glu-142 coordinates NADPH. Mn(2+) is bound at residue Asp-166. 1-deoxy-D-xylulose 5-phosphate contacts are provided by Ser-167, Glu-168, Ser-192, and His-215. Glu-168 lines the Mn(2+) pocket. NADPH is bound at residue Gly-221. Residues Ser-228, Asn-233, Lys-234, and Glu-237 each contribute to the 1-deoxy-D-xylulose 5-phosphate site. Residue Glu-237 participates in Mn(2+) binding.

The protein belongs to the DXR family. Requires Mg(2+) as cofactor. Mn(2+) is required as a cofactor.

The catalysed reaction is 2-C-methyl-D-erythritol 4-phosphate + NADP(+) = 1-deoxy-D-xylulose 5-phosphate + NADPH + H(+). It functions in the pathway isoprenoid biosynthesis; isopentenyl diphosphate biosynthesis via DXP pathway; isopentenyl diphosphate from 1-deoxy-D-xylulose 5-phosphate: step 1/6. In terms of biological role, catalyzes the NADPH-dependent rearrangement and reduction of 1-deoxy-D-xylulose-5-phosphate (DXP) to 2-C-methyl-D-erythritol 4-phosphate (MEP). This Oleidesulfovibrio alaskensis (strain ATCC BAA-1058 / DSM 17464 / G20) (Desulfovibrio alaskensis) protein is 1-deoxy-D-xylulose 5-phosphate reductoisomerase.